A 665-amino-acid polypeptide reads, in one-letter code: LisH domain-containing protein ARMC9 (665 aa).

Residues 7-39 (HESELLGLVKEYLDFAEFEDTLKTFSKECKIKG) enclose the LisH domain. Residues 201-235 (ENGQSNKEMLQQLHQQLVEAERRSMTYLKRYNKIQ) adopt a coiled-coil conformation. Serine 582 bears the Phosphoserine mark. The segment at 642–665 (VQWSGDEPLQRPVTPGGHRNGYPV) is disordered.

In terms of assembly, interacts with TOGARAM1, CCDC66, CEP104, CSPP1 and CEP290. Interacts with NDUFAF2.

It localises to the cytoplasm. It is found in the cytoskeleton. The protein localises to the cilium basal body. The protein resides in the cell projection. Its subcellular location is the cilium. It localises to the microtubule organizing center. It is found in the centrosome. The protein localises to the centriole. Functionally, involved in ciliogenesis. It is required for appropriate acetylation and polyglutamylation of ciliary microtubules, and regulation of cilium length. Acts as a positive regulator of hedgehog (Hh)signaling. May participate in the trafficking and/or retention of GLI2 and GLI3 proteins at the ciliary tip. This Pongo abelii (Sumatran orangutan) protein is LisH domain-containing protein ARMC9 (ARMC9).